The sequence spans 2145 residues: U5 small nuclear ribonucleoprotein 200 kDa helicase (2145 aa).

2 disordered regions span residues 54 to 82 (GDRA…AQQF) and 202 to 243 (DSDE…GDGH). A compositionally biased stretch (acidic residues) spans 220–231 (SEEESEEEEGVD). The region spanning 484-667 (DSALRSKEHL…FLRVKPEHLH (184 aa)) is the Helicase ATP-binding 1 domain. An ATP-binding site is contributed by 497–504 (APTGAGKT). Positions 609 to 612 (DEIH) match the DEAH box motif. The region spanning 677-894 (PLEQQYIGVT…QMVSRLTDML (218 aa)) is the Helicase C-terminal domain. The region spanning 975–1278 (TELGRIASHF…IGAETVLPIS (304 aa)) is the SEC63 1 domain. A Helicase ATP-binding 2 domain is found at 1331 to 1506 (RTVFESNENV…WLGCSASATF (176 aa)). 1344–1351 (APNGSGKT) is an ATP binding site. A DEAH box motif is present at residues 1448–1451 (DDLH). Residues 1812–2124 (LNLGMIASYY…YLGADQEFDV (313 aa)) enclose the SEC63 2 domain.

Belongs to the helicase family. SKI2 subfamily.

It localises to the nucleus. The catalysed reaction is ATP + H2O = ADP + phosphate + H(+). Catalyzes the ATP-dependent unwinding of U4/U6 RNA duplices, an essential step in the assembly of a catalytically active spliceosome. Plays a role in pre-mRNA splicing. The polypeptide is U5 small nuclear ribonucleoprotein 200 kDa helicase (Caenorhabditis elegans).